The primary structure comprises 1164 residues: DNA-directed RNA polymerase 132 kDa polypeptide (1164 aa).

The protein belongs to the RNA polymerase beta chain family. The DNA-dependent RNA polymerase used for intermediate and late genes expression consists of eight subunits (147) kDa, (133) kDa, (35) kDa, (30) kDa, (22) kDa, (19) kDa, (18) kDa and (7) kDa totalling more than 500 kDa in mass. The same holoenzyme, with the addition of the transcription-specificity factor RAP94, is used for early gene expression.

It localises to the virion. The enzyme catalyses RNA(n) + a ribonucleoside 5'-triphosphate = RNA(n+1) + diphosphate. Its function is as follows. Part of the DNA-dependent RNA polymerase which catalyzes the transcription of viral DNA into RNA using the four ribonucleoside triphosphates as substrates. Responsible for the transcription of early, intermediate and late genes. DNA-dependent RNA polymerase associates with the early transcription factor (ETF), itself composed of D6 and A7, thereby allowing the early genes transcription. Late transcription, and probably also intermediate transcription, require newly synthesized RNA polymerase. The chain is DNA-directed RNA polymerase 132 kDa polypeptide (RPO132) from Monkeypox virus (strain Zaire-96-I-16) (MPX).